Reading from the N-terminus, the 354-residue chain is AT-hook motif nuclear-localized protein 11 (354 aa).

2 disordered regions span residues 1–158 and 290–354; these read MDRR…MMPS and KREE…LMRG. 2 stretches are compositionally biased toward low complexity: residues 46-55 and 75-96; these read NSISPFGSNP and VDSSPADSSAAAAGALVAPPSG. A Bipartite nuclear localization signal motif is present at residues 101 to 109; the sequence is KRKRGRPRK. The segment at residues 101 to 113 is a DNA-binding region (a.T hook 1); the sequence is KRKRGRPRKYGQD. Over residues 122–133 the composition is skewed to low complexity; the sequence is SPSISNVSPNSN. A DNA-binding region (a.T hook 2) is located at residues 134 to 146; it reads KRGRGRPPGSGKK. Residues 159–302 enclose the PPC domain; sequence STGMSFTPHV…ETSEDVQDTD (144 aa). Residues 294–303 are compositionally biased toward acidic residues; the sequence is TSEDVQDTDA. The segment covering 304–327 has biased composition (polar residues); that stretch reads LENNNDNTAATSPPVPQQSQNIVQ. Residues 340–354 show a composition bias toward basic and acidic residues; the sequence is MDMHHPHMDIDLMRG.

It is found in the nucleus. Functionally, transcription factor that specifically binds AT-rich DNA sequences related to the nuclear matrix attachment regions (MARs). This is AT-hook motif nuclear-localized protein 11 from Arabidopsis thaliana (Mouse-ear cress).